A 389-amino-acid chain; its full sequence is Succinyl-diaminopimelate desuccinylase (389 aa).

H72 lines the Zn(2+) pocket. D74 is a catalytic residue. D105 is a Zn(2+) binding site. E144 serves as the catalytic Proton acceptor. 3 residues coordinate Zn(2+): E145, E173, and H362.

The protein belongs to the peptidase M20A family. DapE subfamily. As to quaternary structure, homodimer. Zn(2+) serves as cofactor. Requires Co(2+) as cofactor.

The catalysed reaction is N-succinyl-(2S,6S)-2,6-diaminopimelate + H2O = (2S,6S)-2,6-diaminopimelate + succinate. Its pathway is amino-acid biosynthesis; L-lysine biosynthesis via DAP pathway; LL-2,6-diaminopimelate from (S)-tetrahydrodipicolinate (succinylase route): step 3/3. In terms of biological role, catalyzes the hydrolysis of N-succinyl-L,L-diaminopimelic acid (SDAP), forming succinate and LL-2,6-diaminopimelate (DAP), an intermediate involved in the bacterial biosynthesis of lysine and meso-diaminopimelic acid, an essential component of bacterial cell walls. This chain is Succinyl-diaminopimelate desuccinylase, found in Rhodopseudomonas palustris (strain HaA2).